The chain runs to 101 residues: DNA-binding protein Fis (101 aa).

Residues 77–96 (QTRAANMLGINRGTLRKKLK) constitute a DNA-binding region (H-T-H motif).

Belongs to the transcriptional regulatory Fis family. As to quaternary structure, homodimer.

In terms of biological role, activates ribosomal RNA transcription. Plays a direct role in upstream activation of rRNA promoters. This chain is DNA-binding protein Fis, found in Shewanella frigidimarina (strain NCIMB 400).